We begin with the raw amino-acid sequence, 208 residues long: 23 kDa protein (208 aa).

This is 23 kDa protein from Pea early browning virus.